We begin with the raw amino-acid sequence, 350 residues long: Fe(3+) ions import ATP-binding protein FbpC (350 aa).

The ABC transporter domain occupies 4–236; it reads LDIINLSKSF…PNDEQTAHFL (233 aa). An ATP-binding site is contributed by 36–43; the sequence is GPSGSGKT.

It belongs to the ABC transporter superfamily. Fe(3+) ion importer (TC 3.A.1.10) family. As to quaternary structure, the complex is composed of two ATP-binding proteins (FbpC), two transmembrane proteins (FbpB) and a solute-binding protein (FbpA).

It is found in the cell inner membrane. The catalysed reaction is Fe(3+)(out) + ATP + H2O = Fe(3+)(in) + ADP + phosphate + H(+). Part of the ABC transporter complex FbpABC involved in Fe(3+) ions import. Responsible for energy coupling to the transport system. The sequence is that of Fe(3+) ions import ATP-binding protein FbpC from Pseudomonas fluorescens (strain Pf0-1).